Reading from the N-terminus, the 255-residue chain is Tryptophan synthase alpha chain (255 aa).

Active-site proton acceptor residues include E51 and D62.

It belongs to the TrpA family. In terms of assembly, tetramer of two alpha and two beta chains.

It catalyses the reaction (1S,2R)-1-C-(indol-3-yl)glycerol 3-phosphate + L-serine = D-glyceraldehyde 3-phosphate + L-tryptophan + H2O. Its pathway is amino-acid biosynthesis; L-tryptophan biosynthesis; L-tryptophan from chorismate: step 5/5. Its function is as follows. The alpha subunit is responsible for the aldol cleavage of indoleglycerol phosphate to indole and glyceraldehyde 3-phosphate. This chain is Tryptophan synthase alpha chain, found in Maridesulfovibrio salexigens (strain ATCC 14822 / DSM 2638 / NCIMB 8403 / VKM B-1763) (Desulfovibrio salexigens).